The chain runs to 172 residues: Lipoprotein signal peptidase (172 aa).

A run of 4 helical transmembrane segments spans residues 4 to 24, 39 to 59, 69 to 89, and 93 to 113; these read LSSS…LDQV, VAIL…AFSF, WFFT…LAKL, and WTLE…NVID. Residues aspartate 122 and aspartate 140 contribute to the active site. Residues 136–156 form a helical membrane-spanning segment; the sequence is FNVADMGISIGAVLLIISEFW.

The protein belongs to the peptidase A8 family.

Its subcellular location is the cell inner membrane. The catalysed reaction is Release of signal peptides from bacterial membrane prolipoproteins. Hydrolyzes -Xaa-Yaa-Zaa-|-(S,diacylglyceryl)Cys-, in which Xaa is hydrophobic (preferably Leu), and Yaa (Ala or Ser) and Zaa (Gly or Ala) have small, neutral side chains.. The protein operates within protein modification; lipoprotein biosynthesis (signal peptide cleavage). This protein specifically catalyzes the removal of signal peptides from prolipoproteins. The sequence is that of Lipoprotein signal peptidase from Hydrogenovibrio crunogenus (strain DSM 25203 / XCL-2) (Thiomicrospira crunogena).